Here is a 644-residue protein sequence, read N- to C-terminus: Threonine--tRNA ligase (644 aa).

The 63-residue stretch at 8 to 70 folds into the TGS domain; the sequence is VKAMVITLRD…EEDGELEILT (63 aa). Residues 251–541 are catalytic; sequence DHRKLGKELD…LTEHFAGAFP (291 aa). Zn(2+) contacts are provided by Cys342, His393, and His518.

It belongs to the class-II aminoacyl-tRNA synthetase family. Homodimer. Requires Zn(2+) as cofactor.

Its subcellular location is the cytoplasm. It carries out the reaction tRNA(Thr) + L-threonine + ATP = L-threonyl-tRNA(Thr) + AMP + diphosphate + H(+). Catalyzes the attachment of threonine to tRNA(Thr) in a two-step reaction: L-threonine is first activated by ATP to form Thr-AMP and then transferred to the acceptor end of tRNA(Thr). Also edits incorrectly charged L-seryl-tRNA(Thr). The polypeptide is Threonine--tRNA ligase (Caldanaerobacter subterraneus subsp. tengcongensis (strain DSM 15242 / JCM 11007 / NBRC 100824 / MB4) (Thermoanaerobacter tengcongensis)).